The chain runs to 173 residues: 16S rRNA aminocarboxypropyltransferase (173 aa).

Positions 25, 72, 96, and 115 each coordinate S-adenosyl-L-methionine.

This sequence belongs to the TDD superfamily. TSR3 family.

The protein resides in the cytoplasm. The enzyme catalyses an N(1)-methylpseudouridine in rRNA + S-adenosyl-L-methionine = N(1)-methyl-N(3)-[(3S)-3-amino-3-carboxypropyl]pseudouridine in rRNA + S-methyl-5'-thioadenosine + H(+). Aminocarboxypropyltransferase that catalyzes the aminocarboxypropyl transfer on pseudouridine corresponding to position 914 in M.jannaschii 16S rRNA. It constitutes the last step in biosynthesis of the hypermodified N1-methyl-N3-(3-amino-3-carboxypropyl) pseudouridine (m1acp3-Psi). The chain is 16S rRNA aminocarboxypropyltransferase from Methanosarcina mazei (strain ATCC BAA-159 / DSM 3647 / Goe1 / Go1 / JCM 11833 / OCM 88) (Methanosarcina frisia).